The chain runs to 541 residues: Tyrosine-protein kinase Yes (541 aa).

Residues 1–10 show a composition bias toward basic and acidic residues; it reads MGCIKSKENK. The disordered stretch occupies residues 1-29; sequence MGCIKSKENKSPAIKYTPENPTEPVNTSA. Glycine 2 carries the N-myristoyl glycine lipid modification. A lipid anchor (S-palmitoyl cysteine; in membrane form) is attached at cysteine 3. The span at 19-29 shows a compositional bias: polar residues; sequence ENPTEPVNTSA. At tyrosine 32 the chain carries Phosphotyrosine. An SH3 domain is found at 89-150; the sequence is GGVTIFVALY…PSNYVAPADS (62 aa). The 98-residue stretch at 156-253 folds into the SH2 domain; sequence WYFGKMGRKD…GLCHKLTTVC (98 aa). A Protein kinase domain is found at 275 to 528; the sequence is LRLEVKLGQG…YIQSFLEDYF (254 aa). ATP contacts are provided by residues 281-289 and lysine 303; that span reads LGQGCFGEV. A phosphotyrosine mark is found at tyrosine 334 and tyrosine 343. Aspartate 394 functions as the Proton acceptor in the catalytic mechanism. Tyrosine 424 carries the phosphotyrosine; by autocatalysis modification. Tyrosine 535 carries the post-translational modification Phosphotyrosine.

In terms of assembly, interacts with YAP1 and CSF1R. Interacts with FASLG. Interacts with CTNND1; this interaction allows YES1-mediated activation of FYN and FER and subsequent phosphorylation of CTNND1. Interacts with IL6ST/gp130. Interacts with SCRIB, when YES1 is in a closed conformation; the interaction facilitates YES1 autophosphorylation. Phosphorylated. Phosphorylation by CSK on the C-terminal tail maintains the enzyme in an inactive state. Autophosphorylation at Tyr-424 maintains enzyme activity by blocking CSK-mediated inhibition. Post-translationally, palmitoylation at Cys-3 promotes membrane localization.

Its subcellular location is the cell membrane. The protein resides in the cytoplasm. It is found in the cytoskeleton. It localises to the microtubule organizing center. The protein localises to the centrosome. Its subcellular location is the cytosol. The protein resides in the cell junction. The enzyme catalyses L-tyrosyl-[protein] + ATP = O-phospho-L-tyrosyl-[protein] + ADP + H(+). Non-receptor protein tyrosine kinase that is involved in the regulation of cell growth and survival, apoptosis, cell-cell adhesion, cytoskeleton remodeling, and differentiation. Stimulation by receptor tyrosine kinases (RTKs) including EGFR, PDGFR, CSF1R and FGFR leads to recruitment of YES1 to the phosphorylated receptor, and activation and phosphorylation of downstream substrates. Upon EGFR activation, promotes the phosphorylation of PARD3 to favor epithelial tight junction assembly. Participates in the phosphorylation of specific junctional components such as CTNND1 by stimulating the FYN and FER tyrosine kinases at cell-cell contacts. Upon T-cell stimulation by CXCL12, phosphorylates collapsin response mediator protein 2/DPYSL2 and induces T-cell migration. Participates in CD95L/FASLG signaling pathway and mediates AKT-mediated cell migration. Plays a role in cell cycle progression by phosphorylating the cyclin dependent kinase 4/CDK4 thus regulating the G1 phase. Also involved in G2/M progression and cytokinesis. Catalyzes phosphorylation of organic cation transporter OCT2 which induces its transport activity. This chain is Tyrosine-protein kinase Yes (Yes1), found in Rattus norvegicus (Rat).